A 427-amino-acid chain; its full sequence is Chaperone SurA (427 aa).

Positions 1–13 (MLGVALLSGAVHA) are cleaved as a signal peptide. 2 consecutive PpiC domains span residues 164–265 (SEEY…KLEE) and 275–374 (RDEV…EVLG).

It is found in the periplasm. The enzyme catalyses [protein]-peptidylproline (omega=180) = [protein]-peptidylproline (omega=0). In terms of biological role, chaperone involved in the correct folding and assembly of outer membrane proteins. Recognizes specific patterns of aromatic residues and the orientation of their side chains, which are found more frequently in integral outer membrane proteins. May act in both early periplasmic and late outer membrane-associated steps of protein maturation. The polypeptide is Chaperone SurA (Pseudomonas putida (strain ATCC 47054 / DSM 6125 / CFBP 8728 / NCIMB 11950 / KT2440)).